Here is a 410-residue protein sequence, read N- to C-terminus: Arginine biosynthesis bifunctional protein ArgJ (410 aa).

The substrate site is built by Thr-160, Lys-186, Thr-197, Glu-283, Asn-405, and Thr-410. The Nucleophile role is filled by Thr-197.

Belongs to the ArgJ family. In terms of assembly, heterotetramer of two alpha and two beta chains.

The protein resides in the cytoplasm. It carries out the reaction N(2)-acetyl-L-ornithine + L-glutamate = N-acetyl-L-glutamate + L-ornithine. The catalysed reaction is L-glutamate + acetyl-CoA = N-acetyl-L-glutamate + CoA + H(+). It functions in the pathway amino-acid biosynthesis; L-arginine biosynthesis; L-ornithine and N-acetyl-L-glutamate from L-glutamate and N(2)-acetyl-L-ornithine (cyclic): step 1/1. It participates in amino-acid biosynthesis; L-arginine biosynthesis; N(2)-acetyl-L-ornithine from L-glutamate: step 1/4. Its activity is regulated as follows. Competitively inhibited by L-ornithine. Catalyzes two activities which are involved in the cyclic version of arginine biosynthesis: the synthesis of N-acetylglutamate from glutamate and acetyl-CoA as the acetyl donor, and of ornithine by transacetylation between N(2)-acetylornithine and glutamate. This chain is Arginine biosynthesis bifunctional protein ArgJ, found in Geobacillus stearothermophilus (Bacillus stearothermophilus).